Consider the following 305-residue polypeptide: tRNA dimethylallyltransferase (305 aa).

Residue 9-16 (GPTASGKS) participates in ATP binding. Residue 11–16 (TASGKS) coordinates substrate. The tract at residues 34-37 (DSKQ) is interaction with substrate tRNA.

This sequence belongs to the IPP transferase family. As to quaternary structure, monomer. The cofactor is Mg(2+).

It catalyses the reaction adenosine(37) in tRNA + dimethylallyl diphosphate = N(6)-dimethylallyladenosine(37) in tRNA + diphosphate. Catalyzes the transfer of a dimethylallyl group onto the adenine at position 37 in tRNAs that read codons beginning with uridine, leading to the formation of N6-(dimethylallyl)adenosine (i(6)A). The protein is tRNA dimethylallyltransferase of Anaplasma marginale (strain St. Maries).